The following is a 273-amino-acid chain: Glutamate racemase (273 aa).

Residues 7-8 and 39-40 contribute to the substrate site; these read DS and YG. The active-site Proton donor/acceptor is Cys-70. Position 71–72 (71–72) interacts with substrate; it reads NT. Catalysis depends on Cys-194, which acts as the Proton donor/acceptor. 195-196 serves as a coordination point for substrate; that stretch reads TH.

Belongs to the aspartate/glutamate racemases family.

The catalysed reaction is L-glutamate = D-glutamate. It functions in the pathway cell wall biogenesis; peptidoglycan biosynthesis. Functionally, provides the (R)-glutamate required for cell wall biosynthesis. This Dinoroseobacter shibae (strain DSM 16493 / NCIMB 14021 / DFL 12) protein is Glutamate racemase.